Reading from the N-terminus, the 359-residue chain is ATP-dependent kinase YFH7 (359 aa).

Gly-31 to Thr-39 contributes to the ATP binding site.

This sequence belongs to the YFH7 family.

In terms of biological role, ATP-dependent kinase that could be involved in endoplasmic reticulum membrane assembly. In Vanderwaltozyma polyspora (strain ATCC 22028 / DSM 70294 / BCRC 21397 / CBS 2163 / NBRC 10782 / NRRL Y-8283 / UCD 57-17) (Kluyveromyces polysporus), this protein is ATP-dependent kinase YFH7 (YFH7).